The chain runs to 263 residues: tRNA pseudouridine synthase A (263 aa).

Catalysis depends on aspartate 51, which acts as the Nucleophile. Tyrosine 109 contributes to the substrate binding site.

The protein belongs to the tRNA pseudouridine synthase TruA family. In terms of assembly, homodimer.

The catalysed reaction is uridine(38/39/40) in tRNA = pseudouridine(38/39/40) in tRNA. Formation of pseudouridine at positions 38, 39 and 40 in the anticodon stem and loop of transfer RNAs. The protein is tRNA pseudouridine synthase A of Pseudoalteromonas atlantica (strain T6c / ATCC BAA-1087).